Here is a 244-residue protein sequence, read N- to C-terminus: Tetraspanin-7 (244 aa).

Topologically, residues 1-11 are cytoplasmic; the sequence is METKPVITCLK. A helical membrane pass occupies residues 12–35; it reads TLLIIYSFVFWITGVILLAVGVWG. Topologically, residues 36–51 are extracellular; that stretch reads KLTLGTYISLIAENST. A glycan (N-linked (GlcNAc...) asparagine) is linked at N49. Residues 52 to 70 form a helical membrane-spanning segment; sequence NAPYVLIGTGTTIVVFGLF. At 71–81 the chain is on the cytoplasmic side; that stretch reads GCFATCRGSPW. Residues 82-107 traverse the membrane as a helical segment; the sequence is MLKLYAMFLSLVFLAELVAGISGFVF. At 108–208 the chain is on the extracellular side; it reads RHEIKDTFLR…LVTSFMETNM (101 aa). N-linked (GlcNAc...) asparagine glycosylation is found at N150, N153, N172, and N183. The helical transmembrane segment at 209–229 threads the bilayer; that stretch reads GIIAGVAFGIAFSQLIGMLLA. Over 230-244 the chain is Cytoplasmic; the sequence is CCLSRFITANQYEMV.

Belongs to the tetraspanin (TM4SF) family.

Its subcellular location is the membrane. Functionally, may be involved in cell proliferation and cell motility. The protein is Tetraspanin-7 (TSPAN7) of Pan troglodytes (Chimpanzee).